Here is a 763-residue protein sequence, read N- to C-terminus: Phosphoglycerol transferase I (763 aa).

Helical transmembrane passes span 1-21, 26-46, 77-97, and 108-128; these read MSEL…AWKA, WWFA…ITLF, ILPG…LGWI, and FGYS…SPAF.

The protein belongs to the OpgB family.

It is found in the cell inner membrane. It catalyses the reaction a phosphatidylglycerol + a membrane-derived-oligosaccharide D-glucose = a 1,2-diacyl-sn-glycerol + a membrane-derived-oligosaccharide 6-(glycerophospho)-D-glucose.. It functions in the pathway glycan metabolism; osmoregulated periplasmic glucan (OPG) biosynthesis. Functionally, transfers a phosphoglycerol residue from phosphatidylglycerol to the membrane-bound nascent glucan backbones. The sequence is that of Phosphoglycerol transferase I from Escherichia coli O17:K52:H18 (strain UMN026 / ExPEC).